A 1436-amino-acid chain; its full sequence is Gag-Pol polyprotein (1436 aa).

A lipid anchor (N-myristoyl glycine; by host) is attached at glycine 2. An interaction with Gp41 region spans residues 7–31 (VLSGGKLDAWEKIRLRPGGRKKYRL). The segment at 8-43 (LSGGKLDAWEKIRLRPGGRKKYRLKHLVWASRELER) is interaction with host CALM1. The interval 12 to 19 (KLDAWEKI) is interaction with host AP3D1. The interval 14 to 33 (DAWEKIRLRPGGRKKYRLKH) is interaction with membrane phosphatidylinositol 4,5-bisphosphate and RNA. The short motif at 16 to 22 (WEKIRLR) is the Nuclear export signal element. Residues 26–32 (RKKYRLK) carry the Nuclear localization signal motif. Residues 73–77 (EDLQS) are interaction with membrane phosphatidylinositol 4,5-bisphosphate. Residues 110–129 (KNKQRTQQAPAAADKEKDSK) are disordered. At tyrosine 134 the chain carries Phosphotyrosine; by host. Residues 191 to 229 (NTVGGHQAAMQMLKDTINEEAAEWDRLHPVHAGPIPPGQ) are interaction with human PPIA/CYPA and NUP153. The tract at residues 279–365 (YSPVSILDIK…GGPSHKARVL (87 aa)) is dimerization/Multimerization of capsid protein p24. 2 CCHC-type zinc fingers span residues 393–410 (VKCS…NCRA) and 414–431 (KGCW…DCTG). Composition is skewed to basic and acidic residues over residues 447-457 (KAREFPPEEAR) and 464-475 (RELRVRRGDHPL). Residues 447–482 (KAREFPPEEARANSPTSRELRVRRGDHPLSEAGAER) are disordered. Residues 490–494 (PQITL) are dimerization of protease. The Peptidase A2 domain maps to 509-578 (KEALLDTGAD…TPVNIIGRNI (70 aa)). The active-site For protease activity; shared with dimeric partner is the aspartate 514. Dimerization of protease stretches follow at residues 538-544 (GIGGFIK) and 577-589 (NILT…LNLP). The region spanning 632–822 (EGKISKIGPE…PPFLWMGYEL (191 aa)) is the Reverse transcriptase domain. The Mg(2+) site is built by aspartate 698, aspartate 773, and aspartate 774. The segment at 815–823 (FLWMGYELH) is RT 'primer grip'. A Tryptophan repeat motif motif is present at residues 986 to 1002 (WETWWTEHWQATWIPEW). One can recognise an RNase H type-1 domain in the interval 1022 to 1145 (IEGAETYYVD…VDKLVSSGIR (124 aa)). The Mg(2+) site is built by aspartate 1031, glutamate 1066, aspartate 1086, and aspartate 1137. The Integrase-type zinc finger occupies 1151–1192 (DGIDKAQVQHEKYHSNWRAMASDFNLPPIVAKEIVASCDKCQ). Residues histidine 1160, histidine 1164, cysteine 1188, and cysteine 1191 each contribute to the Zn(2+) site. The Integrase catalytic domain occupies 1202–1352 (VDCSPGIWQL…SARERIIDII (151 aa)). Mg(2+)-binding residues include aspartate 1212, aspartate 1264, and glutamate 1300. The integrase-type DNA-binding region spans 1371 to 1418 (FRVYYRDSRDPIWKGPAKLLWKGEGAVVIQDNSEIKVVPRRKAKIIRD).

In terms of assembly, homotrimer; further assembles as hexamers of trimers. Interacts with gp41 (via C-terminus). Interacts with host CALM1; this interaction induces a conformational change in the Matrix protein, triggering exposure of the myristate group. Interacts with host AP3D1; this interaction allows the polyprotein trafficking to multivesicular bodies during virus assembly. Part of the pre-integration complex (PIC) which is composed of viral genome, matrix protein, Vpr and integrase. As to quaternary structure, homodimer; the homodimer further multimerizes as homohexamers or homopentamers. Interacts with human PPIA/CYPA; This interaction stabilizes the capsid. Interacts with human NUP153. Interacts with host PDZD8; this interaction stabilizes the capsid. Interacts with monkey TRIM5; this interaction destabilizes the capsid. Homodimer, whose active site consists of two apposed aspartic acid residues. In terms of assembly, heterodimer of p66 RT and p51 RT (RT p66/p51). Heterodimerization of RT is essential for DNA polymerase activity. The overall folding of the subdomains is similar in p66 RT and p51 RT but the spatial arrangements of the subdomains are dramatically different. As to quaternary structure, homotetramer; may further associate as a homohexadecamer. Part of the pre-integration complex (PIC) which is composed of viral genome, matrix protein, Vpr and integrase. Interacts with human SMARCB1/INI1 and human PSIP1/LEDGF isoform 1. Interacts with human KPNA3; this interaction might play a role in nuclear import of the pre-integration complex. Interacts with human NUP153; this interaction might play a role in nuclear import of the pre-integration complex. Mg(2+) is required as a cofactor. Post-translationally, specific enzymatic cleavages by the viral protease yield mature proteins. The protease is released by autocatalytic cleavage. The polyprotein is cleaved during and after budding, this process is termed maturation. Proteolytic cleavage of p66 RT removes the RNase H domain to yield the p51 RT subunit. Nucleocapsid protein p7 might be further cleaved after virus entry. Tyrosine phosphorylated presumably in the virion by a host kinase. Phosphorylation is apparently not a major regulator of membrane association. In terms of processing, phosphorylated possibly by host MAPK1; this phosphorylation is necessary for Pin1-mediated virion uncoating. Post-translationally, methylated by host PRMT6, impairing its function by reducing RNA annealing and the initiation of reverse transcription.

Its subcellular location is the host cell membrane. The protein localises to the host endosome. It localises to the host multivesicular body. It is found in the virion membrane. The protein resides in the host nucleus. Its subcellular location is the host cytoplasm. The protein localises to the virion. It carries out the reaction Specific for a P1 residue that is hydrophobic, and P1' variable, but often Pro.. The enzyme catalyses Endohydrolysis of RNA in RNA/DNA hybrids. Three different cleavage modes: 1. sequence-specific internal cleavage of RNA. Human immunodeficiency virus type 1 and Moloney murine leukemia virus enzymes prefer to cleave the RNA strand one nucleotide away from the RNA-DNA junction. 2. RNA 5'-end directed cleavage 13-19 nucleotides from the RNA end. 3. DNA 3'-end directed cleavage 15-20 nucleotides away from the primer terminus.. The catalysed reaction is 3'-end directed exonucleolytic cleavage of viral RNA-DNA hybrid.. It catalyses the reaction DNA(n) + a 2'-deoxyribonucleoside 5'-triphosphate = DNA(n+1) + diphosphate. Its activity is regulated as follows. Protease: The viral protease is inhibited by many synthetic protease inhibitors (PIs), such as amprenavir, atazanavir, indinavir, loprinavir, nelfinavir, ritonavir and saquinavir. Use of protease inhibitors in tritherapy regimens permit more ambitious therapeutic strategies. Reverse transcriptase/ribonuclease H: RT can be inhibited either by nucleoside RT inhibitors (NRTIs) or by non nucleoside RT inhibitors (NNRTIs). NRTIs act as chain terminators, whereas NNRTIs inhibit DNA polymerization by binding a small hydrophobic pocket near the RT active site and inducing an allosteric change in this region. Classical NRTIs are abacavir, adefovir (PMEA), didanosine (ddI), lamivudine (3TC), stavudine (d4T), tenofovir (PMPA), zalcitabine (ddC), and zidovudine (AZT). Classical NNRTIs are atevirdine (BHAP U-87201E), delavirdine, efavirenz (DMP-266), emivirine (I-EBU), and nevirapine (BI-RG-587). The tritherapies used as a basic effective treatment of AIDS associate two NRTIs and one NNRTI. Mediates, with Gag polyprotein, the essential events in virion assembly, including binding the plasma membrane, making the protein-protein interactions necessary to create spherical particles, recruiting the viral Env proteins, and packaging the genomic RNA via direct interactions with the RNA packaging sequence (Psi). Gag-Pol polyprotein may regulate its own translation, by the binding genomic RNA in the 5'-UTR. At low concentration, the polyprotein would promote translation, whereas at high concentration, the polyprotein would encapsidate genomic RNA and then shut off translation. Functionally, targets the polyprotein to the plasma membrane via a multipartite membrane-binding signal, that includes its myristoylated N-terminus. Matrix protein is part of the pre-integration complex. Implicated in the release from host cell mediated by Vpu. Binds to RNA. In terms of biological role, forms the conical core that encapsulates the genomic RNA-nucleocapsid complex in the virion. Most core are conical, with only 7% tubular. The core is constituted by capsid protein hexamer subunits. The core is disassembled soon after virion entry. Host restriction factors such as TRIM5-alpha or TRIMCyp bind retroviral capsids and cause premature capsid disassembly, leading to blocks in reverse transcription. Capsid restriction by TRIM5 is one of the factors which restricts HIV-1 to the human species. Host PIN1 apparently facilitates the virion uncoating. On the other hand, interactions with PDZD8 or CYPA stabilize the capsid. Its function is as follows. Encapsulates and protects viral dimeric unspliced genomic RNA (gRNA). Binds these RNAs through its zinc fingers. Acts as a nucleic acid chaperone which is involved in rearangement of nucleic acid secondary structure during gRNA retrotranscription. Also facilitates template switch leading to recombination. As part of the polyprotein, participates in gRNA dimerization, packaging, tRNA incorporation and virion assembly. Aspartyl protease that mediates proteolytic cleavages of Gag and Gag-Pol polyproteins during or shortly after the release of the virion from the plasma membrane. Cleavages take place as an ordered, step-wise cascade to yield mature proteins. This process is called maturation. Displays maximal activity during the budding process just prior to particle release from the cell. Also cleaves Nef and Vif, probably concomitantly with viral structural proteins on maturation of virus particles. Hydrolyzes host EIF4GI and PABP1 in order to shut off the capped cellular mRNA translation. The resulting inhibition of cellular protein synthesis serves to ensure maximal viral gene expression and to evade host immune response. Also mediates cleavage of host YTHDF3. Mediates cleavage of host CARD8, thereby activating the CARD8 inflammasome, leading to the clearance of latent HIV-1 in patient CD4(+) T-cells after viral reactivation; in contrast, HIV-1 can evade CARD8-sensing when its protease remains inactive in infected cells prior to viral budding. Functionally, multifunctional enzyme that converts the viral RNA genome into dsDNA in the cytoplasm, shortly after virus entry into the cell. This enzyme displays a DNA polymerase activity that can copy either DNA or RNA templates, and a ribonuclease H (RNase H) activity that cleaves the RNA strand of RNA-DNA heteroduplexes in a partially processive 3' to 5' endonucleasic mode. Conversion of viral genomic RNA into dsDNA requires many steps. A tRNA(3)-Lys binds to the primer-binding site (PBS) situated at the 5'-end of the viral RNA. RT uses the 3' end of the tRNA primer to perform a short round of RNA-dependent minus-strand DNA synthesis. The reading proceeds through the U5 region and ends after the repeated (R) region which is present at both ends of viral RNA. The portion of the RNA-DNA heteroduplex is digested by the RNase H, resulting in a ssDNA product attached to the tRNA primer. This ssDNA/tRNA hybridizes with the identical R region situated at the 3' end of viral RNA. This template exchange, known as minus-strand DNA strong stop transfer, can be either intra- or intermolecular. RT uses the 3' end of this newly synthesized short ssDNA to perform the RNA-dependent minus-strand DNA synthesis of the whole template. RNase H digests the RNA template except for two polypurine tracts (PPTs) situated at the 5'-end and near the center of the genome. It is not clear if both polymerase and RNase H activities are simultaneous. RNase H probably can proceed both in a polymerase-dependent (RNA cut into small fragments by the same RT performing DNA synthesis) and a polymerase-independent mode (cleavage of remaining RNA fragments by free RTs). Secondly, RT performs DNA-directed plus-strand DNA synthesis using the PPTs that have not been removed by RNase H as primers. PPTs and tRNA primers are then removed by RNase H. The 3' and 5' ssDNA PBS regions hybridize to form a circular dsDNA intermediate. Strand displacement synthesis by RT to the PBS and PPT ends produces a blunt ended, linear dsDNA copy of the viral genome that includes long terminal repeats (LTRs) at both ends. In terms of biological role, catalyzes viral DNA integration into the host chromosome, by performing a series of DNA cutting and joining reactions. This enzyme activity takes place after virion entry into a cell and reverse transcription of the RNA genome in dsDNA. The first step in the integration process is 3' processing. This step requires a complex comprising the viral genome, matrix protein, Vpr and integrase. This complex is called the pre-integration complex (PIC). The integrase protein removes 2 nucleotides from each 3' end of the viral DNA, leaving recessed CA OH's at the 3' ends. In the second step, the PIC enters cell nucleus. This process is mediated through integrase and Vpr proteins, and allows the virus to infect a non dividing cell. This ability to enter the nucleus is specific of lentiviruses, other retroviruses cannot and rely on cell division to access cell chromosomes. In the third step, termed strand transfer, the integrase protein joins the previously processed 3' ends to the 5' ends of strands of target cellular DNA at the site of integration. The 5'-ends are produced by integrase-catalyzed staggered cuts, 5 bp apart. A Y-shaped, gapped, recombination intermediate results, with the 5'-ends of the viral DNA strands and the 3' ends of target DNA strands remaining unjoined, flanking a gap of 5 bp. The last step is viral DNA integration into host chromosome. This involves host DNA repair synthesis in which the 5 bp gaps between the unjoined strands are filled in and then ligated. Since this process occurs at both cuts flanking the HIV genome, a 5 bp duplication of host DNA is produced at the ends of HIV-1 integration. Alternatively, Integrase may catalyze the excision of viral DNA just after strand transfer, this is termed disintegration. The polypeptide is Gag-Pol polyprotein (gag-pol) (Human immunodeficiency virus type 1 group M subtype H (isolate VI991) (HIV-1)).